Here is a 186-residue protein sequence, read N- to C-terminus: Elongation factor P (186 aa).

The protein belongs to the elongation factor P family.

The protein localises to the cytoplasm. It participates in protein biosynthesis; polypeptide chain elongation. Its function is as follows. Involved in peptide bond synthesis. Stimulates efficient translation and peptide-bond synthesis on native or reconstituted 70S ribosomes in vitro. Probably functions indirectly by altering the affinity of the ribosome for aminoacyl-tRNA, thus increasing their reactivity as acceptors for peptidyl transferase. The polypeptide is Elongation factor P (Shewanella sp. (strain ANA-3)).